The following is a 487-amino-acid chain: Probable nuclear hormone receptor HR3 (487 aa).

Residues 48–123 (IIPCKVCGDK…LGMSRDAVKF (76 aa)) constitute a DNA-binding region (nuclear receptor). 2 consecutive NR C4-type zinc fingers follow at residues 51–71 (CKVC…CEGC) and 87–111 (CPRN…LQKC). A disordered region spans residues 145–176 (MRAQSDAAPDSSVYDTQTPSSSDQLHHNNYNS). A compositionally biased stretch (polar residues) spans 157–167 (VYDTQTPSSSD). Residues 237–480 (INDVLIKTLA…PALYKELFSI (244 aa)) form the NR LBD domain.

The protein belongs to the nuclear hormone receptor family. NR1 subfamily.

The protein resides in the nucleus. In terms of biological role, putative receptor whose ligand is not yet known. This is Probable nuclear hormone receptor HR3 from Drosophila melanogaster (Fruit fly).